The following is a 131-amino-acid chain: Fluoride-specific ion channel FluC (131 aa).

3 helical membrane passes run 3 to 23, 34 to 54, and 62 to 82; these read AAAN…GAWL, IFLT…LLMG, and AVPA…LGGL. The Na(+) site is built by Gly80 and Thr83. Residues 101-121 form a helical membrane-spanning segment; it reads WGWLALHAAVHVAGSLLMAWI.

This sequence belongs to the fluoride channel Fluc/FEX (TC 1.A.43) family.

The protein resides in the cell inner membrane. It catalyses the reaction fluoride(in) = fluoride(out). Its activity is regulated as follows. Na(+) is not transported, but it plays an essential structural role and its presence is essential for fluoride channel function. Its function is as follows. Fluoride-specific ion channel. Important for reducing fluoride concentration in the cell, thus reducing its toxicity. This chain is Fluoride-specific ion channel FluC, found in Aromatoleum aromaticum (strain DSM 19018 / LMG 30748 / EbN1) (Azoarcus sp. (strain EbN1)).